The sequence spans 668 residues: Phosphatidylinositol 4-phosphate 5-kinase type-1 gamma (668 aa).

The tract at residues 45-67 is disordered; that stretch reads SMTAQPGPGHGKKLGHRGVDASG. The PIPK domain maps to 75 to 443; the sequence is TSSTLKGAIQ…RFFKFMSNTV (369 aa). An N6-acetyllysine mark is found at lysine 265 and lysine 268. Arginine 459 carries the post-translational modification Asymmetric dimethylarginine; alternate. At arginine 459 the chain carries Omega-N-methylarginine; alternate. A compositionally biased stretch (low complexity) spans 526–535; it reads TTLSSTSLSI. 2 disordered regions span residues 526 to 578 and 593 to 642; these read TTLS…ITVQ and EDAG…YFPT. Serine 555 carries the post-translational modification Phosphoserine. Tyrosine 639 carries the post-translational modification Phosphotyrosine; by EGFR. Residues 641–668 are mediates interaction with TLN2; that stretch reads PTDERSWVYSPLHYSAQAPPASDGESDT. Phosphotyrosine; by CSK is present on tyrosine 649. Serine 650 carries the phosphoserine; by CDK5, MAPK1 and CDK1 modification. 2 positions are modified to phosphoserine: serine 662 and serine 666. Threonine 668 is subject to Phosphothreonine.

Interacts with TLN1. Interacts with TLN2; interaction stimulates 1-phosphatidylinositol-4-phosphate 5-kinase activity. May compete with beta-integrins for the same binding site on TLN1 and TLN2. Interacts with ARF6; interaction stimulates 1-phosphatidylinositol-4-phosphate 5-kinase activity. Interacts with AP2B1. Interacts with AP2M1; phosphorylation of PIP5K1C by CSK disrupts the interaction; clathrin competes with PIP5K1C. Interacts with CDH1. Interacts with CSK. Interacts with PLCG1; interaction is abolished upon EGF stimulation. Interacts with LAPTM4B; promotes SNX5 association with LAPTM4B; kinase activity of PIP5K1C is required; interaction is regulated by phosphatidylinositol 4,5-bisphosphate generated by PIP5K1C. Phosphorylation on Ser-650 negatively regulates binding to TLN2 and is strongly stimulated in mitosis. Phosphorylation on Tyr-649 is necessary for targeting to focal adhesions. Phosphorylation on Ser-650 and Tyr-649 are mutually exclusive. Phosphorylated by SYK and CSK. Tyrosine phosphorylation is enhanced by PTK2 signaling. Phosphorylated at Tyr-639 upon EGF stimulation. Some studies suggest that phosphorylation on Tyr-649 enhances binding to tailins (TLN1 and TLN2). According to PubMed:15738269 phosphorylation at Tyr-649 does not directly enhance binding to tailins (TLN1 and TLN2) but may act indirectly by inhibiting phosphorylation at Ser-650. Post-translationally, acetylation at Lys-265 and Lys-268 seems to decrease lipid 1-phosphatidylinositol-4-phosphate 5-kinase activity. Deacetylation of these sites by SIRT1 positively regulates the exocytosis of TSH-containing granules from pituitary cells. In terms of tissue distribution, isoform 1 is strongly expressed in brain and also detected in heart and lung. Isoform 2 is strongly expressed in pancreas and liver and in lesser quantities in brain, heart, lung and kidney. As to expression, isoform 3 is detected in large amounts in heart and large intestine, is also present in lung, pancreas and thyroid, and to a lesser extent in brain, stomach and kidney.

It is found in the cell membrane. The protein localises to the endomembrane system. It localises to the cytoplasm. The protein resides in the cell junction. Its subcellular location is the focal adhesion. It is found in the adherens junction. The protein localises to the cell projection. It localises to the ruffle membrane. The protein resides in the phagocytic cup. Its subcellular location is the uropodium. It is found in the nucleus. It catalyses the reaction a 1,2-diacyl-sn-glycero-3-phospho-(1D-myo-inositol 4-phosphate) + ATP = a 1,2-diacyl-sn-glycero-3-phospho-(1D-myo-inositol-4,5-bisphosphate) + ADP + H(+). The enzyme catalyses 1-octadecanoyl-2-(5Z,8Z,11Z,14Z)-eicosatetraenoyl-sn-glycero-3-phospho-1D-myo-inositol 4-phosphate + ATP = 1-octadecanoyl-2-(5Z,8Z,11Z,14Z)-eicosatetraenoyl-sn-glycero-3-phospho-1D-myo-inositol 4,5-bisphosphate + ADP + H(+). The catalysed reaction is 1-octadecanoyl-2-(9Z)-octadecenoyl-sn-glycero-3-phospho-1D-myo-inositol 4-phosphate + ATP = 1-octadecanoyl-2-(9Z)-octadecenoyl-sn-glycero-3-phospho-1D-myo-inositol 4,5-bisphosphate + ADP + H(+). It carries out the reaction 1-octadecanoyl-2-(9Z)-octadecenoyl-sn-glycero-3-phospho-1D-myo-inositol + ATP = 1-octadecanoyl-2-(9Z)-octadecenoyl-sn-glycero-3-phospho-1D-myo-inositol 5-phosphate + ADP + H(+). It catalyses the reaction 1-octadecanoyl-2-(9Z,12Z)-octadecadienoyl-sn-glycero-3-phospho-1D-myo-inositol + ATP = 1-octadecanoyl-2-(9Z,12Z)-octadecadienoyl-sn-glycero-3-phospho-1D-myo-inositol 5-phosphate + ADP + H(+). The enzyme catalyses 1-octadecanoyl-2-(5Z,8Z,11Z,14Z-eicosatetraenoyl)-sn-glycero-3-phospho-(1D-myo-inositol) + ATP = 1-octadecanoyl-2-(5Z,8Z,11Z,14Z)-eicosatetraenoyl-sn-glycero-3-phospho-1D-myo-inositol 5-phosphate + ADP + H(+). The catalysed reaction is 1,2-di-(9Z,12Z)-octadecadienoyl-sn-glycero-3-phospho-1D-myo-inositol + ATP = 1,2-di(9Z,12Z)-octadecadienoyl-sn-glycero-3-phospho-1D-myo-inositol 5-phosphate + ADP + H(+). In terms of biological role, catalyzes the phosphorylation of phosphatidylinositol 4-phosphate (PtdIns(4)P/PI4P) to form phosphatidylinositol 4,5-bisphosphate (PtdIns(4,5)P2/PIP2), a lipid second messenger that regulates several cellular processes such as signal transduction, vesicle trafficking, actin cytoskeleton dynamics, cell adhesion, and cell motility. PtdIns(4,5)P2 can directly act as a second messenger or can be utilized as a precursor to generate other second messengers: inositol 1,4,5-trisphosphate (IP3), diacylglycerol (DAG) or phosphatidylinositol-3,4,5-trisphosphate (PtdIns(3,4,5)P3/PIP3). PIP5K1A-mediated phosphorylation of PtdIns(4)P is the predominant pathway for PtdIns(4,5)P2 synthesis. Together with PIP5K1A, is required for phagocytosis, both enzymes regulating different types of actin remodeling at sequential steps. Promotes particle attachment by generating the pool of PtdIns(4,5)P2 that induces controlled actin depolymerization to facilitate Fc-gamma-R clustering. Mediates RAC1-dependent reorganization of actin filaments. Required for synaptic vesicle transport. Controls the plasma membrane pool of PtdIns(4,5)P2 implicated in synaptic vesicle endocytosis and exocytosis. Plays a role in endocytosis mediated by clathrin and AP-2 (adaptor protein complex 2). Required for clathrin-coated pits assembly at the synapse. Participates in cell junction assembly. Modulates adherens junctions formation by facilitating CDH1/cadherin trafficking. Required for focal adhesion dynamics. Modulates the targeting of talins (TLN1 and TLN2) to the plasma membrane and their efficient assembly into focal adhesions. Regulates the interaction between talins (TLN1 and TLN2) and beta-integrins. Required for uropodium formation and retraction of the cell rear during directed migration. Has a role in growth factor-stimulated directional cell migration and adhesion. Required for talin assembly into nascent adhesions forming at the leading edge toward the direction of the growth factor. Negative regulator of T-cell activation and adhesion. Negatively regulates integrin alpha-L/beta-2 (LFA-1) polarization and adhesion induced by T-cell receptor. Together with PIP5K1A has a role during embryogenesis and together with PIP5K1B may have a role immediately after birth. This is Phosphatidylinositol 4-phosphate 5-kinase type-1 gamma from Homo sapiens (Human).